A 1443-amino-acid polypeptide reads, in one-letter code: ARF guanine-nucleotide exchange factor GNL1 (1443 aa).

The SEC7 domain occupies 554 to 743; the sequence is FVRKVKHIKK…SEIYHSIRHS (190 aa). Residue glutamate 658 is part of the active site. Disordered regions lie at residues 917-949 and 1424-1443; these read DDPE…AMPR and DQFQ…GNEV. Polar residues predominate over residues 939-949; the sequence is VSQSQPSAMPR. Over residues 1425 to 1435 the composition is skewed to basic and acidic residues; it reads QFQRRNAKPED.

As to quaternary structure, homodimer.

Its subcellular location is the cytoplasm. The protein localises to the cytosol. It is found in the golgi apparatus membrane. In terms of biological role, activates the ARF proteins by exchanging bound GDP for free GTP. Plays a role in vesicular protein sorting. Acts as the major regulator of retrograde Golgi to endoplasmic reticulum trafficking but is also involved in the endocytosis process. Could function redundantly with GNOM. Regulates vesicle trafficking required for the coordinated polar localization of auxin efflux carriers which in turn determines the direction of auxin flow. Mediates the endocytosis of PIN2 from plasma membrane to endosomal compartments. Required for maintenance of endoplasmic reticulum morphology. The polypeptide is ARF guanine-nucleotide exchange factor GNL1 (GNL1) (Arabidopsis thaliana (Mouse-ear cress)).